Here is a 401-residue protein sequence, read N- to C-terminus: Elongation factor Tu (401 aa).

The tr-type G domain maps to 10–211 (KPHLNIGTIG…AVDTYVPNPT (202 aa)). The tract at residues 19–26 (GHVDHGKT) is G1. 19-26 (GHVDHGKT) contacts GTP. Thr-26 is a binding site for Mg(2+). Residues 62–66 (GITIA) form a G2 region. Positions 83–86 (DCPG) are G3. Residues 83 to 87 (DCPGH) and 138 to 141 (NKAD) each bind GTP. The segment at 138-141 (NKAD) is G4. Residues 179–181 (SAL) form a G5 region.

Belongs to the TRAFAC class translation factor GTPase superfamily. Classic translation factor GTPase family. EF-Tu/EF-1A subfamily. As to quaternary structure, monomer.

It localises to the cytoplasm. It catalyses the reaction GTP + H2O = GDP + phosphate + H(+). Functionally, GTP hydrolase that promotes the GTP-dependent binding of aminoacyl-tRNA to the A-site of ribosomes during protein biosynthesis. The polypeptide is Elongation factor Tu (Leptospira biflexa serovar Patoc (strain Patoc 1 / Ames)).